The primary structure comprises 1042 residues: MFKKVENKANFPKIEEKILKFWNDNKIFEKSMKQREGCEEFTFYDGPPFATGLPHFGHFVPNTIKDIIPRYQTMRGKYVKRNFGWDTHGLPVEYEVEKKLGISGKYEIENYGIENFNKECKKIVLRYTEEWKNIILRLGRWVDFEKGYKTMDINFMESVWWVFKSLYNKGLIYESYYVLPYSPKLATPLSNFEVNLGEYKEVNDPSLTIKFKIKDKNEYLLAWTTTPWTLPSNLGIAVGQEIEYSKIFDKKKEEILILGSKKLDSYYDDENSYTIIEKFKGSKLEGIEYEPIFNYFLEQKDKGAFKVHMADYVTTDDGTGIVHIAPFGEEDYRILKKHTNVDIIDPLDAECKFTNRVKDFQGLFVKDADKKIIENLKLRNFLFKRENYLHRYPFCYRTNYPIIYRPISSWFVNVEKIKTKLLEVNEKINWMPAHLKKGRFGKWLENAKDWAISRNRFWGNPIPIWICSKTGKKICVGSKKELESLSGQKIEDLHKDKVDKITWPSKDGGTFIRTSEVLDCWFESGAMPYASNHYPFTNESNFKNIFPADFIAEGLDQTRGWFYTLTILGVSLFESTAFKNVIVNGLVLSSDGRKMSKSFKNYTDPMEVINTFGADALRLYLIMSPVVKADDLKYSDNGVRDVLKNIIIPIWNAYSFFTTYAIIDKFQPPKNLNLVKNNNLDKWIISELESLKKILNNEIDKYNLTKSIESLLEFIDKLNNWYIRRSRRRFWKSENDKDKNDAYETLYYAIKTLMILLAPFIPFITEEIYQNLKTDEDKQSIHLNDYPKANENLINKTIEEKINLARKITSMARSLRSLHNIKIRMPISMIYIVTKNQNEQNMLIEMQEIILDEINAKEMKIKSNEEDLITYKAKANFKELGKKLGKDMKTVSIEISKLKNEDIIKIINGISYEIKVGNTKYYLSLNDIILEREEKDNLKVINEESITIGIDSLITKELYLEGLTREFVRQIQNLRKEKNFDVSDRINLYIENNETLQEILNKFEKYIKTETLALNIIFNKSKLEKKINLDDNIFTIIGIEKC.

The 'HIGH' region signature appears at 48–58; it reads PFATGLPHFGH. The 'KMSKS' region signature appears at 594–598; the sequence is KMSKS. ATP is bound at residue lysine 597.

It belongs to the class-I aminoacyl-tRNA synthetase family. IleS type 2 subfamily. In terms of assembly, monomer. Zn(2+) serves as cofactor.

Its subcellular location is the cytoplasm. The catalysed reaction is tRNA(Ile) + L-isoleucine + ATP = L-isoleucyl-tRNA(Ile) + AMP + diphosphate. In terms of biological role, catalyzes the attachment of isoleucine to tRNA(Ile). As IleRS can inadvertently accommodate and process structurally similar amino acids such as valine, to avoid such errors it has two additional distinct tRNA(Ile)-dependent editing activities. One activity is designated as 'pretransfer' editing and involves the hydrolysis of activated Val-AMP. The other activity is designated 'posttransfer' editing and involves deacylation of mischarged Val-tRNA(Ile). This Borreliella afzelii (strain PKo) (Borrelia afzelii) protein is Isoleucine--tRNA ligase.